The following is a 116-amino-acid chain: UPF0102 protein Sala_0262 (116 aa).

The protein belongs to the UPF0102 family.

This chain is UPF0102 protein Sala_0262, found in Sphingopyxis alaskensis (strain DSM 13593 / LMG 18877 / RB2256) (Sphingomonas alaskensis).